A 22-amino-acid polypeptide reads, in one-letter code: Caerin-3.2 (22 aa).

K22 bears the Lysine amide mark.

Expressed by the skin parotoid and/or rostral glands.

It is found in the secreted. Functionally, antibacterial peptide, that adopts an alpha helical conformation which can disrupt bacterial membranes. Each caerin displays a different antimicrobial specificity. The polypeptide is Caerin-3.2 (Ranoidea caerulea (Green tree frog)).